A 210-amino-acid chain; its full sequence is Cdc42 effector protein 2 (210 aa).

N-acetylserine is present on Ser-2. One can recognise a CRIB domain in the interval 30 to 44; it reads ISPPLGDFRHTIHIG. Phosphoserine occurs at positions 31, 101, and 141. The tract at residues 122–171 is disordered; the sequence is PTAQAPPKPPRLHLETPQPSPQEGGSVDIWRIPETGSPNSGLTPESGAEE.

It belongs to the BORG/CEP family. Interacts with RHOQ and CDC42 in a GTP-dependent manner, and with SEPT7. Highly expressed in the heart. Weakly expressed in the pancreas and liver.

The protein localises to the endomembrane system. It is found in the cytoplasm. Its subcellular location is the cytoskeleton. Probably involved in the organization of the actin cytoskeleton. May act downstream of CDC42 to induce actin filament assembly leading to cell shape changes. Induces pseudopodia formation in fibroblasts in a CDC42-dependent manner. The protein is Cdc42 effector protein 2 (CDC42EP2) of Homo sapiens (Human).